The chain runs to 107 residues: uncharacterized protein (107 aa).

An N-terminal signal peptide occupies residues 1–20 (MYIKGRLIFFFVVLVIALCS).

This is an uncharacterized protein from Listeria monocytogenes serovar 1/2a (strain ATCC BAA-679 / EGD-e).